The chain runs to 180 residues: Putative manganese efflux pump MntP (180 aa).

The next 5 membrane-spanning stretches (helical) occupy residues 6–26, 33–53, 63–83, 101–121, and 130–150; these read VLLLAGALGTDAFSLCLGLGL, MAWMLVGLIVALHVVLPVAGW, VGRWAAYLGAAILFYLGVKMV, GFLGLTVLAGSVSMDALSVGF, and LLLTAGVIGLVAGLMSAAAFV.

This sequence belongs to the MntP (TC 9.B.29) family.

Its subcellular location is the cell membrane. Functionally, probably functions as a manganese efflux pump. The polypeptide is Putative manganese efflux pump MntP (Desulforudis audaxviator (strain MP104C)).